The following is a 198-amino-acid chain: Pyridoxal 5'-phosphate synthase subunit PdxT (198 aa).

49 to 51 (GES) is a binding site for L-glutamine. Residue cysteine 81 is the Nucleophile of the active site. L-glutamine-binding positions include arginine 113 and 141–142 (IR). Catalysis depends on charge relay system residues histidine 177 and glutamate 179.

This sequence belongs to the glutaminase PdxT/SNO family. As to quaternary structure, in the presence of PdxS, forms a dodecamer of heterodimers. Only shows activity in the heterodimer.

It carries out the reaction aldehydo-D-ribose 5-phosphate + D-glyceraldehyde 3-phosphate + L-glutamine = pyridoxal 5'-phosphate + L-glutamate + phosphate + 3 H2O + H(+). The enzyme catalyses L-glutamine + H2O = L-glutamate + NH4(+). It functions in the pathway cofactor biosynthesis; pyridoxal 5'-phosphate biosynthesis. Catalyzes the hydrolysis of glutamine to glutamate and ammonia as part of the biosynthesis of pyridoxal 5'-phosphate. The resulting ammonia molecule is channeled to the active site of PdxS. The chain is Pyridoxal 5'-phosphate synthase subunit PdxT from Mycobacterium ulcerans (strain Agy99).